The primary structure comprises 618 residues: Proline--tRNA ligase (618 aa).

Belongs to the class-II aminoacyl-tRNA synthetase family. ProS type 1 subfamily. Homodimer.

The protein localises to the cytoplasm. The catalysed reaction is tRNA(Pro) + L-proline + ATP = L-prolyl-tRNA(Pro) + AMP + diphosphate. In terms of biological role, catalyzes the attachment of proline to tRNA(Pro) in a two-step reaction: proline is first activated by ATP to form Pro-AMP and then transferred to the acceptor end of tRNA(Pro). As ProRS can inadvertently accommodate and process non-cognate amino acids such as alanine and cysteine, to avoid such errors it has two additional distinct editing activities against alanine. One activity is designated as 'pretransfer' editing and involves the tRNA(Pro)-independent hydrolysis of activated Ala-AMP. The other activity is designated 'posttransfer' editing and involves deacylation of mischarged Ala-tRNA(Pro). The misacylated Cys-tRNA(Pro) is not edited by ProRS. The sequence is that of Proline--tRNA ligase from Streptococcus pyogenes serotype M18 (strain MGAS8232).